A 710-amino-acid chain; its full sequence is Polyribonucleotide nucleotidyltransferase (710 aa).

Mg(2+) is bound by residues aspartate 489 and aspartate 495. One can recognise a KH domain in the interval 556–615; sequence PKIDTIKIDVDKIKVVIGKGGETIDKIIAETGVKIDIDDEGNVSIYSSDQAAINRTKEII. In terms of domain architecture, S1 motif spans 625–693; the sequence is GEVYHAKVVR…EKGRVDASMK (69 aa). Positions 691–710 are disordered; that stretch reads SMKALIPRPPKPEKKEEKHD. The segment covering 700–710 has biased composition (basic and acidic residues); that stretch reads PKPEKKEEKHD.

The cofactor is Mg(2+).

It is found in the cytoplasm. It carries out the reaction RNA(n+1) + phosphate = RNA(n) + a ribonucleoside 5'-diphosphate. In terms of biological role, involved in mRNA degradation. Catalyzes the phosphorolysis of single-stranded polyribonucleotides processively in the 3'- to 5'-direction. The chain is Polyribonucleotide nucleotidyltransferase from Streptococcus pyogenes serotype M6 (strain ATCC BAA-946 / MGAS10394).